Reading from the N-terminus, the 184-residue chain is Ribosome maturation factor RimM (184 aa).

The PRC barrel domain maps to 106–184 (PGDYYWYQLE…RMIVDWDPEF (79 aa)).

The protein belongs to the RimM family. In terms of assembly, binds ribosomal protein uS19.

It localises to the cytoplasm. An accessory protein needed during the final step in the assembly of 30S ribosomal subunit, possibly for assembly of the head region. Essential for efficient processing of 16S rRNA. May be needed both before and after RbfA during the maturation of 16S rRNA. It has affinity for free ribosomal 30S subunits but not for 70S ribosomes. The protein is Ribosome maturation factor RimM of Chromohalobacter salexigens (strain ATCC BAA-138 / DSM 3043 / CIP 106854 / NCIMB 13768 / 1H11).